Consider the following 123-residue polypeptide: Probable histone H2B 4 (123 aa).

The segment at 1–30 (MPPKPSAKGAKKAAKTVVAKPKDGKKRRHA) is disordered. An O-linked (GlcNAc) serine glycan is attached at S110. Residue K118 forms a Glycyl lysine isopeptide (Lys-Gly) (interchain with G-Cter in ubiquitin) linkage.

This sequence belongs to the histone H2B family. In terms of assembly, the nucleosome is a histone octamer containing two molecules each of H2A, H2B, H3 and H4 assembled in one H3-H4 heterotetramer and two H2A-H2B heterodimers. The octamer wraps approximately 147 bp of DNA. In terms of processing, monoubiquitination of Lys-118 gives a specific tag for epigenetic transcriptional activation and is also prerequisite for histone H3 'Lys-4' and 'Lys-79' methylation. GlcNAcylation at Ser-110 promotes monoubiquitination of Lys-118. It fluctuates in response to extracellular glucose, and associates with transcribed genes.

The protein localises to the nucleus. The protein resides in the chromosome. Core component of nucleosome. Nucleosomes wrap and compact DNA into chromatin, limiting DNA accessibility to the cellular machineries which require DNA as a template. Histones thereby play a central role in transcription regulation, DNA repair, DNA replication and chromosomal stability. DNA accessibility is regulated via a complex set of post-translational modifications of histones, also called histone code, and nucleosome remodeling. The chain is Probable histone H2B 4 (his-48) from Caenorhabditis elegans.